A 182-amino-acid polypeptide reads, in one-letter code: Transcription termination/antitermination protein NusG (182 aa).

The KOW domain maps to 130–161; the sequence is VGEVVRVNEGPFADFNGTVEEVDYEKSRLKVS.

Belongs to the NusG family.

Participates in transcription elongation, termination and antitermination. The chain is Transcription termination/antitermination protein NusG from Vibrio vulnificus (strain CMCP6).